We begin with the raw amino-acid sequence, 168 residues long: MLKIKYLLIGLSLSAMSSYSLAAAGPTLTKELALNVLSPAALDATWAPQDNLTLSNTGVSNTLVGVLTLSNTSIDTVSIASTNVSDTSKNGTVTFAHETNNSASFATTISTDNANITLDKNAGNTIVKTTNGSQLPTNLPLKFITTEGNEHLVSGNYRANITITSTIK.

An N-terminal signal peptide occupies residues 1–22 (MLKIKYLLIGLSLSAMSSYSLA).

Post-translationally, a longer minor form, starting at amino acid 15, has been detected by amino acid sequencing. This is probably due to alternative processing of the signal peptide.

The protein resides in the fimbrium. Its function is as follows. Fimbriae (also called pili), polar filaments radiating from the surface of the bacterium to a length of 0.5-1.5 micrometers and numbering 100-300 per cell, enable bacteria to colonize the epithelium of specific host organs. The sequence is that of CS3 fimbrial subunit A from Escherichia coli.